A 302-amino-acid chain; its full sequence is ICOS ligand (302 aa).

The first 18 residues, 1–18 (MRLGSPGLLFLLFSSLRA), serve as a signal peptide directing secretion. One can recognise an Ig-like V-type domain in the interval 19-129 (DTQEKEVRAM…LGFQEVLSVE (111 aa)). The Extracellular segment spans residues 19-256 (DTQEKEVRAM…VSTGEKNAAT (238 aa)). Cys-37 and Cys-113 are oxidised to a cystine. Asn-70, Asn-137, Asn-173, Asn-186, and Asn-225 each carry an N-linked (GlcNAc...) asparagine glycan. Positions 141–227 (PVVSAPHSPS…ENVLLQQNLT (87 aa)) constitute an Ig-like C2-type domain. Cys-158 and Cys-216 are disulfide-bonded. The helical transmembrane segment at 257–277 (WSILAVLCLLVVVAVAIGWVC) threads the bilayer. Residues 278 to 302 (RDRCLQHSYAGAWAVSPETELTGHV) lie on the Cytoplasmic side of the membrane.

Belongs to the immunoglobulin superfamily. BTN/MOG family. As to quaternary structure, interacts with CTLA4 (in vitro). Expressed on peripheral blood B-cells and monocytes, as well as on monocyte-derived dendritic cells (at protein level). In terms of tissue distribution, widely expressed (brain, heart, kidney, liver, lung, pancreas, placenta, skeletal muscle, bone marrow, colon, ovary, prostate, testis, lymph nodes, leukocytes, spleen, thymus and tonsil). As to expression, detected only in lymph nodes, leukocytes and spleen. Expressed on activated monocytes and dendritic cells.

It is found in the cell membrane. In terms of biological role, ligand for the T-cell-specific cell surface receptor ICOS. Acts as a costimulatory signal for T-cell proliferation and cytokine secretion. Also induces B-cell proliferation and differentiation into plasma cells. Could play an important role in mediating local tissue responses to inflammatory conditions, as well as in modulating the secondary immune response by co-stimulating memory T-cell function. In endothelial cells, required for proper neutrophil transmigration in response to chemoattractants, such as CXCL8/IL8 or N-formyl-methionyl peptides (fMLP). This Homo sapiens (Human) protein is ICOS ligand (ICOSLG).